A 451-amino-acid polypeptide reads, in one-letter code: Exodeoxyribonuclease 7 large subunit (451 aa).

It belongs to the XseA family. In terms of assembly, heterooligomer composed of large and small subunits.

The protein resides in the cytoplasm. The catalysed reaction is Exonucleolytic cleavage in either 5'- to 3'- or 3'- to 5'-direction to yield nucleoside 5'-phosphates.. Bidirectionally degrades single-stranded DNA into large acid-insoluble oligonucleotides, which are then degraded further into small acid-soluble oligonucleotides. This Neisseria meningitidis serogroup B (strain ATCC BAA-335 / MC58) protein is Exodeoxyribonuclease 7 large subunit.